We begin with the raw amino-acid sequence, 183 residues long: MDSEFFQPVYPRHYGECLSPVTPPSFFSTHMYTILIAIVVLVIIIIVLIYLFSSRKKKAAAAIEEEDIQFINPYQDQQWAEVTPQPGTSKPAGATTASAGKPVTGRPATNRPATNKPVTDNPVTDRLVMATGGPAAAPAAASAHPTEPYTTVTTQNTASQTMSAIENLRQRNTYTHKDLENSL.

The chain crosses the membrane as a helical span at residues 32–52; the sequence is YTILIAIVVLVIIIIVLIYLF. Residues 81–157 form a disordered region; the sequence is EVTPQPGTSK…PYTTVTTQNT (77 aa). Polar residues predominate over residues 111–122; that stretch reads RPATNKPVTDNP. Low complexity predominate over residues 130–143; it reads ATGGPAAAPAAASA. The tract at residues 149 to 161 is interaction with host DYNLL1; it reads YTTVTTQNTASQT.

It belongs to the asfivirus envelope protein p54 family. As to quaternary structure, interacts with the host light chain cytoplasmic dynein DYNLL1; this interaction is critical for intracellular microtubule-dependent virus transport toward viral factories.

It is found in the virion membrane. Its subcellular location is the host cytoplasm. The protein localises to the host cytoskeleton. It localises to the host endoplasmic reticulum membrane. Its function is as follows. Inner envelope protein involved, through its interaction with host dynein, in the intracellular microtubule-dependent transport of viral capsid toward viral factories. Seems to induce caspase-3 activation and apoptosis. Plays a role in virion morphogenesis by recruiting and transforming the host ER membranes into the precursors of the viral envelope. Involved in virus attachment to the host cell. The sequence is that of Inner membrane protein p54 from African swine fever virus (strain Badajoz 1971 Vero-adapted) (Ba71V).